The chain runs to 358 residues: uncharacterized protein (358 aa).

The EF-hand domain maps to 229–264; the sequence is KQLHEFKLAFDYFDQEKNGWLDYEHFELCLKSQGYN. Residues D242, N246, W248, and H253 each coordinate Ca(2+).

This is an uncharacterized protein from Caenorhabditis elegans.